We begin with the raw amino-acid sequence, 151 residues long: UPF0208 membrane protein CKO_00500 (151 aa).

The next 2 helical transmembrane spans lie at tyrosine 46–leucine 65 and leucine 69–glycine 91.

This sequence belongs to the UPF0208 family.

It localises to the cell inner membrane. This Citrobacter koseri (strain ATCC BAA-895 / CDC 4225-83 / SGSC4696) protein is UPF0208 membrane protein CKO_00500.